A 574-amino-acid polypeptide reads, in one-letter code: MSVASVALSPALEELVNFPGIIGRFGFNLDDPILVFLTIAGSVIPKRVMESDSIASVKLRIQSIKGFFVKKQKLLYDGREVSRNDSQIRDYGLADGKLLHLVIRLSDLQAISVRTVDGKEFELVVERSRNVGYVKQQIASKEKELGIPRDHELTLDGEELDDQRLITDLCQNGDNVIHLLISKSAKVRAKPVGKDFEVFIEDVNHKHNVDGRRGKNISSEAKPKEFFVEPFIVNPEIKLPILLKELISSTLEGLEKGNGPIRSSDGSGGAYFMQDPSGHKYVSVFKPIDEEPMAVNNPHGQPVSVDGEGLKKGTQVGEGAIREVAAYILDYPMTGPRTFPHDQTGFAGVPPTTMVKCLHKDFNHPNGYSFSPENTKIGSLQMFVSNVGSCEDMGYRVFPVDQVHKISVLDIRLANADRHAGNILVSRDGKDGQMVLTPIDHGYCFPNKFEDCTFEWLYWPQAKEPYSSETLEYIKSLDPEKDIELLRFHGWEIPPSCTRVLRISTMLLKKGSAKGLTPFTIGSIMCRETLKEESVIEQIIHDAEAIVPTETTEDEFISTVSAIMDNRLDQYAWN.

2 Ubiquitin-like domains span residues 32 to 109 (PILV…SDLQ) and 110 to 188 (AISV…AKVR). One can recognise a PI3K/PI4K catalytic domain in the interval 257–555 (GNGPIRSSDG…IVPTETTEDE (299 aa)). The segment at 263–269 (SSDGSGG) is G-loop. Residues 264–270 (SDGSGGA), Lys286, and 381–384 (QMFV) contribute to the ATP site. The tract at residues 414–422 (ANADRHAGN) is catalytic loop. Residues 438–464 (PIDHGYCFPNKFEDCTFEWLYWPQAKE) form an activation loop region. Asp440 is an ATP binding site.

The protein belongs to the PI3/PI4-kinase family. Type II PI4K subfamily.

It catalyses the reaction a 1,2-diacyl-sn-glycero-3-phospho-(1D-myo-inositol) + ATP = a 1,2-diacyl-sn-glycero-3-phospho-(1D-myo-inositol 4-phosphate) + ADP + H(+). Functionally, the phosphorylation of phosphatidylinositol (PI) to PI4P is the first committed step in the generation of phosphatidylinositol 4,5-bisphosphate (PIP2), a precursor of the second messenger inositol 1,4,5-trisphosphate (InsP3). The chain is Phosphatidylinositol 4-kinase gamma 3 (PI4KG3) from Arabidopsis thaliana (Mouse-ear cress).